Here is a 184-residue protein sequence, read N- to C-terminus: Peptide deformylase (184 aa).

The Fe cation site is built by Cys-98 and His-140. Glu-141 is an active-site residue. His-144 is a Fe cation binding site.

Belongs to the polypeptide deformylase family. It depends on Fe(2+) as a cofactor.

The enzyme catalyses N-terminal N-formyl-L-methionyl-[peptide] + H2O = N-terminal L-methionyl-[peptide] + formate. Removes the formyl group from the N-terminal Met of newly synthesized proteins. Requires at least a dipeptide for an efficient rate of reaction. N-terminal L-methionine is a prerequisite for activity but the enzyme has broad specificity at other positions. The chain is Peptide deformylase from Bacteroides fragilis (strain ATCC 25285 / DSM 2151 / CCUG 4856 / JCM 11019 / LMG 10263 / NCTC 9343 / Onslow / VPI 2553 / EN-2).